A 602-amino-acid polypeptide reads, in one-letter code: MEKAKDSLPTTGDPVPSQGTINPVDETGGSASDEKKAKKGCDFWFTFSSLVLTAFLSALEGSVVSTALPTIARALEASENYVWVVNVYYLSKYETWLTYLLRFSSAAFQPIYGQLADLWGRRWLTIGAVVIFTVGSGICGGATSIDMLIGGRAIQGLGSAGINMLVELILCDLLPLRERGQFFGIIFMFVILGSVIGPFLGGILVDRVSWRWVFYINIPFSGVCVVLLFFFLHIKNAGTGNFIDKVKRIDFFGNFLLAASVGSCLFALTYGDTRYPFSDTRIIVSLVLGLLGHVAFMFFEASPWCKEPVMPMVLFKNRTSAGAYIATFLQTLVSFWVLYFLPLYFQSTQLVSATRSGVMLLPFSVVYALSSLAGGALTTKLGRFRNIHFASFALMTIGMGTLTILNRSTSLAVIVVLEMIVALAIGVPTANLLTAIQAALPDELNALSTGTFAFLRSVGTIWGVSIPAAIFNNRFDQLLPELSDPTAVRALQRGGAYQQATSEFVDSFPSDVRDVIISIYERSLERVWQIGIVFAGVGFLVIFLERDLKLGTQKKTEDIEINDIPQTAADNSASRPNTINDTASQAPILKQRRSTNQERETV.

Residues 1-33 form a disordered region; that stretch reads MEKAKDSLPTTGDPVPSQGTINPVDETGGSASD. Transmembrane regions (helical) follow at residues 43-63, 123-143, 156-176, 185-205, 212-232, 251-271, and 282-302; these read FWFT…EGSV, WLTI…GGAT, GLGS…LLPL, IIFM…GILV, WVFY…FFFL, FFGN…LTYG, and IIVS…FEAS. An N-linked (GlcNAc...) asparagine glycan is attached at Asn317. The next 6 helical transmembrane spans lie at 325–345, 357–377, 386–406, 410–430, 451–471, and 524–544; these read IATF…PLYF, GVML…GGAL, NIHF…TILN, SLAV…VPTA, TFAF…AAIF, and LERV…VIFL. A compositionally biased stretch (polar residues) spans 564 to 585; the sequence is IPQTAADNSASRPNTINDTASQ. Positions 564–602 are disordered; sequence IPQTAADNSASRPNTINDTASQAPILKQRRSTNQERETV. An N-linked (GlcNAc...) asparagine glycan is attached at Asn580.

Belongs to the major facilitator superfamily.

Its subcellular location is the cell membrane. Its function is as follows. MFS-type efflux transporter; part of the gene cluster that mediates the biosynthesis of the mycotoxin pyrichalasin H, a tyrosine-derived cytochalasan that inhibits the growth of rice seedlings, but also inhibits lymphocyte capping and actin polymerization and alters cell morphology. Pyrichalasin H is indicated as the responsible agent for the genus-specific pathogenicity of M.grisea toward crabgrass. PyiT might be involved in the excretion of pyrichalasin H. The polypeptide is MFS-type efflux transporter pyiT (Pyricularia grisea (Crabgrass-specific blast fungus)).